The sequence spans 347 residues: Ataxin-7-like protein 3 (347 aa).

The segment at Cys-84–Cys-105 adopts an SGF11-type zinc-finger fold. Residues Ala-116 to Asn-125 show a composition bias toward low complexity. Residues Ala-116–Lys-184 are disordered. Phosphoserine occurs at positions 129 and 131. The segment covering Asp-132–Asp-141 has biased composition (acidic residues). Positions Leu-196–Thr-263 constitute an SCA7 domain. Residues Asp-275–Ser-288 are compositionally biased toward low complexity. The interval Asp-275–Asn-347 is disordered. Phosphoserine occurs at positions 278, 281, and 326.

This sequence belongs to the SGF11 family. In terms of assembly, component of some SAGA transcription coactivator-HAT complexes, at least composed of ATXN7, ATXN7L3, ENY2, GCN5L2, SUPT3H, TAF10, TRRAP and USP22. Within the SAGA complex, ENY2, ATXN7, ATXN7L3, and USP22 form an additional subcomplex of SAGA called the DUB module (deubiquitination module). Interacts directly with ENY2 and USP22.

It localises to the nucleus. Functionally, component of the transcription regulatory histone acetylation (HAT) complex SAGA, a multiprotein complex that activates transcription by remodeling chromatin and mediating histone acetylation and deubiquitination. Within the SAGA complex, participates in a subcomplex that specifically deubiquitinates both histones H2A and H2B. The SAGA complex is recruited to specific gene promoters by activators such as MYC, where it is required for transcription. Required for nuclear receptor-mediated transactivation. Within the complex, it is required to recruit USP22 and ENY2 into the SAGA complex. Regulates H2B monoubiquitination (H2Bub1) levels. Affects subcellular distribution of ENY2, USP22 and ATXN7L3B. The protein is Ataxin-7-like protein 3 of Homo sapiens (Human).